The sequence spans 93 residues: Protein FMP16, mitochondrial (93 aa).

Residues 1–25 (MLRTTFLRTPRQLMRKSPRASFSIV) constitute a mitochondrion transit peptide. The segment at 30 to 93 (FPHLKNNQDE…EQNRPDDGVY (64 aa)) is disordered. A compositionally biased stretch (basic and acidic residues) spans 35–93 (NNQDEAEKKEQGLFDSNKKRLDTLEHGKNPDYKQPGMEDLKKKGDDARIEQNRPDDGVY).

It is found in the mitochondrion. The sequence is that of Protein FMP16, mitochondrial (FMP16) from Saccharomyces cerevisiae (strain ATCC 204508 / S288c) (Baker's yeast).